We begin with the raw amino-acid sequence, 612 residues long: Dihydroxy-acid dehydratase (612 aa).

Asp81 lines the Mg(2+) pocket. Cys122 serves as a coordination point for [2Fe-2S] cluster. The Mg(2+) site is built by Asp123 and Lys124. An N6-carboxylysine modification is found at Lys124. Cys195 is a binding site for [2Fe-2S] cluster. Glu491 contacts Mg(2+). Ser517 (proton acceptor) is an active-site residue.

It belongs to the IlvD/Edd family. In terms of assembly, homodimer. Requires [2Fe-2S] cluster as cofactor. Mg(2+) is required as a cofactor.

The catalysed reaction is (2R)-2,3-dihydroxy-3-methylbutanoate = 3-methyl-2-oxobutanoate + H2O. The enzyme catalyses (2R,3R)-2,3-dihydroxy-3-methylpentanoate = (S)-3-methyl-2-oxopentanoate + H2O. It functions in the pathway amino-acid biosynthesis; L-isoleucine biosynthesis; L-isoleucine from 2-oxobutanoate: step 3/4. The protein operates within amino-acid biosynthesis; L-valine biosynthesis; L-valine from pyruvate: step 3/4. Functions in the biosynthesis of branched-chain amino acids. Catalyzes the dehydration of (2R,3R)-2,3-dihydroxy-3-methylpentanoate (2,3-dihydroxy-3-methylvalerate) into 2-oxo-3-methylpentanoate (2-oxo-3-methylvalerate) and of (2R)-2,3-dihydroxy-3-methylbutanoate (2,3-dihydroxyisovalerate) into 2-oxo-3-methylbutanoate (2-oxoisovalerate), the penultimate precursor to L-isoleucine and L-valine, respectively. This Psychromonas ingrahamii (strain DSM 17664 / CCUG 51855 / 37) protein is Dihydroxy-acid dehydratase.